A 116-amino-acid polypeptide reads, in one-letter code: Nucleoid-associated protein SACE_0254 (116 aa).

The tract at residues L90–L116 is disordered. A compositionally biased stretch (gly residues) spans A101–L116.

Belongs to the YbaB/EbfC family. In terms of assembly, homodimer.

It localises to the cytoplasm. The protein localises to the nucleoid. Functionally, binds to DNA and alters its conformation. May be involved in regulation of gene expression, nucleoid organization and DNA protection. This is Nucleoid-associated protein SACE_0254 from Saccharopolyspora erythraea (strain ATCC 11635 / DSM 40517 / JCM 4748 / NBRC 13426 / NCIMB 8594 / NRRL 2338).